A 1185-amino-acid chain; its full sequence is Chromosome partition protein Smc (1185 aa).

34-41 contributes to the ATP binding site; sequence PNGSGKSN. Coiled-coil stretches lie at residues 174–376 and 412–526; these read WRRS…EKDI and ENIV…KLDV. Positions 534–644 constitute an SMC hinge domain; sequence VGEIISLQKK…CENIDNAFEI (111 aa). A coiled-coil region spans residues 679–1039; it reads NIIGRKREIE…IDAMTEKMKG (361 aa).

The protein belongs to the SMC family. As to quaternary structure, homodimer.

Its subcellular location is the cytoplasm. Required for chromosome condensation and partitioning. This Clostridium kluyveri (strain NBRC 12016) protein is Chromosome partition protein Smc.